The sequence spans 510 residues: MATPYISMAGIGKSFGPVHALKSVNLTVYPGEIHALLGENGAGKSTLMKVLSGIHEPTKGTITINNISYNKLDHKLAAQLGIGIIYQELSVIDELTVLENLYIGRHLTKKICGVNIIDWREMRVRAAMMLLRVGLKVDLDEKVANLSISHKQMLEIAKTLMLDAKVIIMDEPTSSLTNKEVDYLFLIMNQLRKEGTAIVYISHKLAEIRRICDRYTVMKDGSSVCSGIVSDVSNDDIVRLMVGRELQNRFNAMKENVSNLAHETVFEVRNVTSRDRKKVRDISFSVCRGEILGFAGLVGSGRTELMNCLFGVDKRAGGEIRLNGKDISPRSPLDAVKKGMAYITESRRDNGFFPNFSIAQNMAISRSLKDGGYKGAMGLFHEVDEQRTAENQRELLALKCHSVNQNITELSGGNQQKVLISKWLCCCPEVIIFDEPTRGIDVGAKAEIYKVMRQLADDGKVILMVSSELPEIITVCDRIAVFCEGRLTQILTNRDDMSEEEIMAWALPQE.

ABC transporter domains lie at 6–245 (ISMA…VGRE) and 260–509 (LAHE…ALPQ). 38 to 45 (GENGAGKS) contacts ATP.

The protein belongs to the ABC transporter superfamily. D-allose importer (TC 3.A.1.2.6) family. The complex is composed of two ATP-binding proteins (AlsA), two transmembrane proteins (AlsC) and a solute-binding protein (AlsB).

Its subcellular location is the cell inner membrane. It carries out the reaction D-allose(out) + ATP + H2O = D-allose(in) + ADP + phosphate + H(+). Part of the ABC transporter complex AlsBAC involved in D-allose import. Probably responsible for energy coupling to the transport system. This chain is D-allose import ATP-binding protein AlsA (alsA), found in Escherichia coli (strain K12).